A 462-amino-acid chain; its full sequence is ATP synthase subunit beta (462 aa).

151-158 (GGAGVGKT) serves as a coordination point for ATP.

The protein belongs to the ATPase alpha/beta chains family. In terms of assembly, F-type ATPases have 2 components, CF(1) - the catalytic core - and CF(0) - the membrane proton channel. CF(1) has five subunits: alpha(3), beta(3), gamma(1), delta(1), epsilon(1). CF(0) has four main subunits: a(1), b(1), b'(1) and c(9-12).

It is found in the cell inner membrane. It carries out the reaction ATP + H2O + 4 H(+)(in) = ADP + phosphate + 5 H(+)(out). Its function is as follows. Produces ATP from ADP in the presence of a proton gradient across the membrane. The catalytic sites are hosted primarily by the beta subunits. This Chlorobium phaeovibrioides (strain DSM 265 / 1930) (Prosthecochloris vibrioformis (strain DSM 265)) protein is ATP synthase subunit beta.